The primary structure comprises 926 residues: Transcriptional activator protein acu-15 (926 aa).

The zn(2)-C6 fungal-type DNA-binding region spans 24-51 (CDRCRSKKIRCDGIRPCCSQCANVGFEC). Disordered regions lie at residues 100 to 129 (KMHS…TPAK), 602 to 649 (LPQS…SASL), and 667 to 801 (TPQH…TSTG). Residues 119–129 (EIKRDSGTPAK) show a composition bias toward basic and acidic residues. Low complexity-rich tracts occupy residues 623–632 (AQQGSPSPSA) and 669–681 (QHQQ…LQQQ). Composition is skewed to polar residues over residues 689-703 (ARSQ…QKAQ) and 726-736 (RTSTGTQSTPN). The span at 740–792 (LSLSSPQSPVSPVQMRSQPHQLQQQQQQQPQPQQQQQQHQRSSIASSHSQQGQ) shows a compositional bias: low complexity.

The protein resides in the nucleus. In terms of biological role, positive regulator of acetate induction. This is Transcriptional activator protein acu-15 (acu-15) from Neurospora crassa (strain ATCC 24698 / 74-OR23-1A / CBS 708.71 / DSM 1257 / FGSC 987).